The primary structure comprises 481 residues: Pyruvate kinase (481 aa).

Arginine 36 is a binding site for substrate. K(+)-binding residues include asparagine 38, serine 40, and aspartate 70. Position 38 to 41 (38 to 41 (NFSH)) interacts with ATP. Residues arginine 77 and lysine 160 each contribute to the ATP site. Glutamate 225 is a binding site for Mg(2+). The substrate site is built by glycine 251, aspartate 252, and threonine 284. Aspartate 252 contributes to the Mg(2+) binding site.

The protein belongs to the pyruvate kinase family. In terms of assembly, homotetramer. Mg(2+) is required as a cofactor. It depends on K(+) as a cofactor.

It carries out the reaction pyruvate + ATP = phosphoenolpyruvate + ADP + H(+). Its pathway is carbohydrate degradation; glycolysis; pyruvate from D-glyceraldehyde 3-phosphate: step 5/5. Its activity is regulated as follows. Allosterically activated by AMP and by several sugar phosphates. Belongs to type II PK. The chain is Pyruvate kinase (pykA) from Buchnera aphidicola subsp. Schizaphis graminum (strain Sg).